The sequence spans 1399 residues: DNA-directed RNA polymerase subunit beta' (1399 aa).

Zn(2+)-binding residues include cysteine 70, cysteine 72, cysteine 85, and cysteine 88. 3 residues coordinate Mg(2+): aspartate 460, aspartate 462, and aspartate 464. Zn(2+)-binding residues include cysteine 814, cysteine 888, cysteine 895, and cysteine 898.

The protein belongs to the RNA polymerase beta' chain family. The RNAP catalytic core consists of 2 alpha, 1 beta, 1 beta' and 1 omega subunit. When a sigma factor is associated with the core the holoenzyme is formed, which can initiate transcription. The cofactor is Mg(2+). Zn(2+) is required as a cofactor.

It carries out the reaction RNA(n) + a ribonucleoside 5'-triphosphate = RNA(n+1) + diphosphate. Functionally, DNA-dependent RNA polymerase catalyzes the transcription of DNA into RNA using the four ribonucleoside triphosphates as substrates. In Pseudomonas putida (strain ATCC 47054 / DSM 6125 / CFBP 8728 / NCIMB 11950 / KT2440), this protein is DNA-directed RNA polymerase subunit beta'.